Consider the following 1007-residue polypeptide: Lysosomal alpha-mannosidase (1007 aa).

A signal peptide spans 1–47 (MGASVLPLGLGAGDCQSSSGRRMSACLPRTALSFLLSLLLATPGARA). Disulfide bonds link cysteine 53-cysteine 356 and cysteine 266-cysteine 271. Positions 70 and 72 each coordinate Zn(2+). The N-linked (GlcNAc...) asparagine glycan is linked to asparagine 131. Aspartate 194 lines the Zn(2+) pocket. Residue aspartate 194 is the Nucleophile of the active site. Residues asparagine 308, asparagine 343, and asparagine 365 are each glycosylated (N-linked (GlcNAc...) asparagine). 2 disulfides stabilise this stretch: cysteine 410-cysteine 470 and cysteine 491-cysteine 499. Position 444 (histidine 444) interacts with Zn(2+). N-linked (GlcNAc...) asparagine glycosylation is found at asparagine 495, asparagine 540, asparagine 639, asparagine 686, asparagine 760, and asparagine 927.

This sequence belongs to the glycosyl hydrolase 38 family. Zn(2+) serves as cofactor.

Its subcellular location is the lysosome. It catalyses the reaction Hydrolysis of terminal, non-reducing alpha-D-mannose residues in alpha-D-mannosides.. Functionally, necessary for the catabolism of N-linked carbohydrates released during glycoprotein turnover. This Cavia porcellus (Guinea pig) protein is Lysosomal alpha-mannosidase (MAN2B1).